Reading from the N-terminus, the 517-residue chain is UDP-N-acetylmuramyl-tripeptide synthetase (517 aa).

A UDP-N-acetyl-alpha-D-muramoyl-L-alanyl-D-glutamate-binding site is contributed by Ser-38. Residue 116 to 122 (GTKGKTT) participates in ATP binding. UDP-N-acetyl-alpha-D-muramoyl-L-alanyl-D-glutamate-binding positions include Asn-160, 162-163 (TT), Ser-189, and Arg-197. At Lys-231 the chain carries N6-carboxylysine.

It belongs to the MurCDEF family. MurE subfamily. Post-translationally, carboxylation is probably crucial for Mg(2+) binding and, consequently, for the gamma-phosphate positioning of ATP.

Its subcellular location is the cytoplasm. The protein operates within cell wall biogenesis; peptidoglycan biosynthesis. Functionally, catalyzes the addition of an amino acid to the nucleotide precursor UDP-N-acetylmuramoyl-L-alanyl-D-glutamate (UMAG) in the biosynthesis of bacterial cell-wall peptidoglycan. The chain is UDP-N-acetylmuramyl-tripeptide synthetase from Lacticaseibacillus paracasei (strain ATCC 334 / BCRC 17002 / CCUG 31169 / CIP 107868 / KCTC 3260 / NRRL B-441) (Lactobacillus paracasei).